Here is a 390-residue protein sequence, read N- to C-terminus: tRNA(Met) cytidine acetate ligase (390 aa).

ATP is bound by residues 7–20, Gly-101, Asn-162, and Arg-187; that span reads VVEY…HKLH.

It belongs to the TmcAL family.

The protein resides in the cytoplasm. The catalysed reaction is cytidine(34) in elongator tRNA(Met) + acetate + ATP = N(4)-acetylcytidine(34) in elongator tRNA(Met) + AMP + diphosphate. Its function is as follows. Catalyzes the formation of N(4)-acetylcytidine (ac(4)C) at the wobble position of elongator tRNA(Met), using acetate and ATP as substrates. First activates an acetate ion to form acetyladenylate (Ac-AMP) and then transfers the acetyl group to tRNA to form ac(4)C34. This Listeria monocytogenes serovar 1/2a (strain ATCC BAA-679 / EGD-e) protein is tRNA(Met) cytidine acetate ligase.